The sequence spans 528 residues: Na(+)/H(+) antiporter NhaB (528 aa).

The next 10 helical transmembrane spans lie at 28-50 (FLVI…VLVV), 67-87 (PGGL…SQVL), 98-118 (LLLV…LFVF), 140-160 (AFLS…AVAV), 240-260 (FFLR…FTCF), 305-325 (ALIG…VGLI), 350-370 (EEAL…GVII), 391-411 (LVIF…VFVG), 449-469 (ATPN…APLI), and 476-496 (MVWM…MAIE).

Belongs to the NhaB Na(+)/H(+) (TC 2.A.34) antiporter family.

It localises to the cell inner membrane. The catalysed reaction is 2 Na(+)(in) + 3 H(+)(out) = 2 Na(+)(out) + 3 H(+)(in). In terms of biological role, na(+)/H(+) antiporter that extrudes sodium in exchange for external protons. This chain is Na(+)/H(+) antiporter NhaB, found in Shewanella frigidimarina (strain NCIMB 400).